Consider the following 529-residue polypeptide: Neuronal acetylcholine receptor subunit alpha-2 (529 aa).

Residues 1–26 (MGPSCPVFLSFTKLSLWWLLLTPAGG) form the signal peptide. The disordered stretch occupies residues 27 to 56 (EEAKRPPPRAPGDPLSSPSPTALPQGGSHT). Residues 27-264 (EEAKRPPPRA…VTYAFVIRRL (238 aa)) lie on the Extracellular side of the membrane. Asn-79 and Asn-129 each carry an N-linked (GlcNAc...) asparagine glycan. Cys-183 and Cys-197 are disulfide-bonded. Residue Asn-235 is glycosylated (N-linked (GlcNAc...) asparagine). Cys-247 and Cys-248 form a disulfide bridge. Transmembrane regions (helical) follow at residues 265-289 (PLFY…VFYL), 297-315 (ITLC…LLIT), and 331-352 (YLLF…VLNV). Residues 353-502 (HHRSPSTHTM…WKYVAMVIDR (150 aa)) lie on the Cytoplasmic side of the membrane. Residues 503–521 (IFLWLFIIVCFLGTIGLFL) form a helical membrane-spanning segment.

It belongs to the ligand-gated ion channel (TC 1.A.9) family. Acetylcholine receptor (TC 1.A.9.1) subfamily. Alpha-2/CHRNA2 sub-subfamily. In terms of assembly, neuronal AChR is composed of two different types of subunits: alpha and non-alpha (beta). CHRNA2/alpha-2 subunit can be combined to CHRNB2/beta-2 or CHRNB4/beta-4 to give rise to functional receptors. Both CHRNA2:CHRNB2 and CHRNA2:CHRNB4 nAChR complexes are heteropentamers with two subtypes: LS (low agonist sensitivity) with a (CHRNA2)3:(CHRNB2/4)2 and HS (high agonist sensitivity) with a (CHRNA2)2:(CHRNB2/4)3 stoichiometries; the subtypes differ in their subunit binding interfaces which are involved in ligand binding.

The protein resides in the synaptic cell membrane. The protein localises to the cell membrane. It catalyses the reaction Ca(2+)(in) = Ca(2+)(out). The enzyme catalyses K(+)(in) = K(+)(out). The catalysed reaction is Na(+)(in) = Na(+)(out). Functionally, component of neuronal acetylcholine receptors (nAChRs) that function as pentameric, ligand-gated cation channels with high calcium permeability among other activities. nAChRs are excitatory neurotrasnmitter receptors formed by a collection of nAChR subunits known to mediate synaptic transmission in the nervous system and the neuromuscular junction. Each nAchR subunit confers differential attributes to channel properties, including activation, deactivation and desensitization kinetics, pH sensitivity, cation permeability, and binding to allosteric modulators. CHRNA2 forms heteropentameric neuronal acetylcholine receptors with CHRNB2 and CHRNB4 and plays a role in nicotine dependence. This Homo sapiens (Human) protein is Neuronal acetylcholine receptor subunit alpha-2.